A 197-amino-acid polypeptide reads, in one-letter code: Probable GTP-binding protein EngB (197 aa).

Residues 22–195 enclose the EngB-type G domain; it reads GYPEIALVGR…WNWIEAQAFG (174 aa). Residues 30 to 37, 57 to 61, 75 to 78, 142 to 145, and 174 to 176 each bind GTP; these read GRSNVGKS, GKTQT, DVPG, TKSD, and FSA. Residues S37 and T59 each contribute to the Mg(2+) site.

It belongs to the TRAFAC class TrmE-Era-EngA-EngB-Septin-like GTPase superfamily. EngB GTPase family. The cofactor is Mg(2+).

Functionally, necessary for normal cell division and for the maintenance of normal septation. The chain is Probable GTP-binding protein EngB from Levilactobacillus brevis (strain ATCC 367 / BCRC 12310 / CIP 105137 / JCM 1170 / LMG 11437 / NCIMB 947 / NCTC 947) (Lactobacillus brevis).